The chain runs to 588 residues: Protein kintoun (588 aa).

Disordered stretches follow at residues 199–223 (PGYE…PENS), 338–498 (PPLE…SSQE), and 510–535 (AANV…ADED). Basic and acidic residues predominate over residues 202 to 212 (EAKEPPEERDL). Residues 350-361 (PNPTSDPQNENQ) show a composition bias toward polar residues. 2 stretches are compositionally biased toward basic and acidic residues: residues 362–382 (TRVE…HQRG) and 393–433 (QVLE…KFEL). The span at 435-447 (DVQQENKGNCSNT) shows a compositional bias: polar residues. Residues 448–460 (KEVKCCRRTKDSL) are compositionally biased toward basic and acidic residues.

This sequence belongs to the PIH1 family. Kintoun subfamily.

Its subcellular location is the cytoplasm. It localises to the dynein axonemal particle. In terms of biological role, required for cytoplasmic pre-assembly of axonemal dyneins, thereby playing a central role in motility in cilia and flagella. Involved in pre-assembly of dynein arm complexes in the cytoplasm before intraflagellar transport loads them for the ciliary compartment. The sequence is that of Protein kintoun from Oryzias latipes (Japanese rice fish).